Here is a 201-residue protein sequence, read N- to C-terminus: MIAFVSGTVAALAPDAAVIEVGGVGMAVQCTPNTLSTLRLGKPAKLATSLVVREDSLTLYGFADDDERQVFELLQTASGVGPRLAQAMLAVHQPDALRRAVATGDEKALTAVPGIGKKGAQKLLLELKDRLGEPIGAPAVGAPVSTGWRDQLHAALIGLGYATREADEAVSAVAPQAEAAGGTPQVGALLKAALQTLNRAR.

Residues Met-1–Ala-63 are domain I. The interval Asp-64–Ala-139 is domain II. Positions Ala-139 to Pro-143 are flexible linker. The segment at Val-144–Arg-201 is domain III.

It belongs to the RuvA family. In terms of assembly, homotetramer. Forms an RuvA(8)-RuvB(12)-Holliday junction (HJ) complex. HJ DNA is sandwiched between 2 RuvA tetramers; dsDNA enters through RuvA and exits via RuvB. An RuvB hexamer assembles on each DNA strand where it exits the tetramer. Each RuvB hexamer is contacted by two RuvA subunits (via domain III) on 2 adjacent RuvB subunits; this complex drives branch migration. In the full resolvosome a probable DNA-RuvA(4)-RuvB(12)-RuvC(2) complex forms which resolves the HJ.

The protein resides in the cytoplasm. The RuvA-RuvB-RuvC complex processes Holliday junction (HJ) DNA during genetic recombination and DNA repair, while the RuvA-RuvB complex plays an important role in the rescue of blocked DNA replication forks via replication fork reversal (RFR). RuvA specifically binds to HJ cruciform DNA, conferring on it an open structure. The RuvB hexamer acts as an ATP-dependent pump, pulling dsDNA into and through the RuvAB complex. HJ branch migration allows RuvC to scan DNA until it finds its consensus sequence, where it cleaves and resolves the cruciform DNA. This is Holliday junction branch migration complex subunit RuvA from Streptomyces coelicolor (strain ATCC BAA-471 / A3(2) / M145).